The chain runs to 353 residues: Rhodopsin (353 aa).

Topologically, residues 1-36 (MNGTEGENFYIPFSNKTGLARSPFEYPQYYLAEPWK) are extracellular. 2 N-linked (GlcNAc...) asparagine glycosylation sites follow: Asn2 and Asn15. A helical transmembrane segment spans residues 37–61 (YSVLAAYMFFLILVGFPVNFLTLFV). Over 62–73 (TVQHKKLRTPLN) the chain is Cytoplasmic. The helical transmembrane segment at 74–96 (YILLNLAVANLFMVLFGFTLTMY) threads the bilayer. Residues 97–110 (SSMNGYFVFGPTMC) lie on the Extracellular side of the membrane. An intrachain disulfide couples Cys110 to Cys187. A helical membrane pass occupies residues 111–133 (NFEGFFATLGGEMSLWSLVVLAI). Residues 134-136 (ERY) carry the 'Ionic lock' involved in activated form stabilization motif. Topologically, residues 134–152 (ERYIVICKPMGNFRFGSTH) are cytoplasmic. The helical transmembrane segment at 153–173 (AYMGVAFTWFMALSCAAPPLV) threads the bilayer. The Extracellular segment spans residues 174–202 (GWSRYLPEGMQCSCGPDYYTLNPNFNNES). A helical transmembrane segment spans residues 203–224 (FVIYMFLVHFIIPFIVIFFCYG). Over 225-252 (RLLCTVKEAAAAQQESASTQKAEKEVTR) the chain is Cytoplasmic. Residues 253–274 (MVVLMVIGFLVCWVPYASVAFY) traverse the membrane as a helical segment. Over 275–286 (IFTHQGSDFGAT) the chain is Extracellular. A helical transmembrane segment spans residues 287–308 (FMTVPAFFAKTSALYNPIIYIL). An N6-(retinylidene)lysine modification is found at Lys296. The Cytoplasmic portion of the chain corresponds to 309-353 (MNKQFRNCMITTLCCGKNPLGDEDSGASTSKTEVSSVSTSQVSPA). The segment at 330–353 (DEDSGASTSKTEVSSVSTSQVSPA) is disordered. The segment covering 336–353 (STSKTEVSSVSTSQVSPA) has biased composition (low complexity).

This sequence belongs to the G-protein coupled receptor 1 family. Opsin subfamily. Phosphorylated on some or all of the serine and threonine residues present in the C-terminal region. Post-translationally, contains one covalently linked retinal chromophore.

The protein localises to the membrane. The protein resides in the cell projection. It is found in the cilium. Its subcellular location is the photoreceptor outer segment. Photoreceptor required for image-forming vision at low light intensity. While most salt water fish species use retinal as chromophore, most freshwater fish use 3-dehydroretinal, or a mixture of retinal and 3-dehydroretinal. Light-induced isomerization of 11-cis to all-trans retinal triggers a conformational change that activates signaling via G-proteins. Subsequent receptor phosphorylation mediates displacement of the bound G-protein alpha subunit by arrestin and terminates signaling. In Petromyzon marinus (Sea lamprey), this protein is Rhodopsin (RHO).